The following is a 92-amino-acid chain: Small ribosomal subunit protein uS19c (92 aa).

It belongs to the universal ribosomal protein uS19 family.

It is found in the plastid. In terms of biological role, protein S19 forms a complex with S13 that binds strongly to the 16S ribosomal RNA. The sequence is that of Small ribosomal subunit protein uS19c from Cuscuta obtusiflora (Peruvian dodder).